The chain runs to 959 residues: Glycine dehydrogenase (decarboxylating) (959 aa).

Residue lysine 708 is modified to N6-(pyridoxal phosphate)lysine.

The protein belongs to the GcvP family. The glycine cleavage system is composed of four proteins: P, T, L and H. Pyridoxal 5'-phosphate serves as cofactor.

It carries out the reaction N(6)-[(R)-lipoyl]-L-lysyl-[glycine-cleavage complex H protein] + glycine + H(+) = N(6)-[(R)-S(8)-aminomethyldihydrolipoyl]-L-lysyl-[glycine-cleavage complex H protein] + CO2. The glycine cleavage system catalyzes the degradation of glycine. The P protein binds the alpha-amino group of glycine through its pyridoxal phosphate cofactor; CO(2) is released and the remaining methylamine moiety is then transferred to the lipoamide cofactor of the H protein. The chain is Glycine dehydrogenase (decarboxylating) from Yersinia enterocolitica serotype O:8 / biotype 1B (strain NCTC 13174 / 8081).